The following is a 237-amino-acid chain: DNA repair protein RecO (237 aa).

It belongs to the RecO family.

Involved in DNA repair and RecF pathway recombination. In Rickettsia peacockii (strain Rustic), this protein is DNA repair protein RecO.